We begin with the raw amino-acid sequence, 247 residues long: tRNA uridine(34) hydroxylase (247 aa).

A Rhodanese domain is found at 124 to 218 (TKQDVIVIDT…YLEDTQNKNN (95 aa)). Cysteine 178 serves as the catalytic Cysteine persulfide intermediate.

This sequence belongs to the TrhO family.

It carries out the reaction uridine(34) in tRNA + AH2 + O2 = 5-hydroxyuridine(34) in tRNA + A + H2O. Catalyzes oxygen-dependent 5-hydroxyuridine (ho5U) modification at position 34 in tRNAs. The protein is tRNA uridine(34) hydroxylase of Rickettsia africae (strain ESF-5).